The sequence spans 371 residues: tRNA-specific 2-thiouridylase MnmA (371 aa).

ATP is bound by residues 24 to 31 (AMSGGVDS) and Leu-50. The active-site Nucleophile is the Cys-119. A disulfide bridge connects residues Cys-119 and Cys-215. Gly-143 is an ATP binding site. Residues 165–167 (KDQ) are interaction with tRNA. The active-site Cysteine persulfide intermediate is Cys-215.

This sequence belongs to the MnmA/TRMU family.

It is found in the cytoplasm. The catalysed reaction is S-sulfanyl-L-cysteinyl-[protein] + uridine(34) in tRNA + AH2 + ATP = 2-thiouridine(34) in tRNA + L-cysteinyl-[protein] + A + AMP + diphosphate + H(+). Its function is as follows. Catalyzes the 2-thiolation of uridine at the wobble position (U34) of tRNA, leading to the formation of s(2)U34. This is tRNA-specific 2-thiouridylase MnmA from Neorickettsia sennetsu (strain ATCC VR-367 / Miyayama) (Ehrlichia sennetsu).